The following is a 432-amino-acid chain: Glutamyl-tRNA reductase (432 aa).

Substrate-binding positions include 49 to 52 (TCNR), Ser109, 114 to 116 (EGQ), and Gln120. Cys50 acts as the Nucleophile in catalysis. NADP(+) is bound at residue 198 to 203 (GAGRMS).

Belongs to the glutamyl-tRNA reductase family. As to quaternary structure, homodimer.

It catalyses the reaction (S)-4-amino-5-oxopentanoate + tRNA(Glu) + NADP(+) = L-glutamyl-tRNA(Glu) + NADPH + H(+). It participates in porphyrin-containing compound metabolism; protoporphyrin-IX biosynthesis; 5-aminolevulinate from L-glutamyl-tRNA(Glu): step 1/2. It functions in the pathway porphyrin-containing compound metabolism; chlorophyll biosynthesis. Functionally, catalyzes the NADPH-dependent reduction of glutamyl-tRNA(Glu) to glutamate 1-semialdehyde (GSA). This chain is Glutamyl-tRNA reductase, found in Synechococcus sp. (strain CC9605).